The sequence spans 113 residues: Large ribosomal subunit protein uL22 (113 aa).

This sequence belongs to the universal ribosomal protein uL22 family. In terms of assembly, part of the 50S ribosomal subunit.

Functionally, this protein binds specifically to 23S rRNA; its binding is stimulated by other ribosomal proteins, e.g. L4, L17, and L20. It is important during the early stages of 50S assembly. It makes multiple contacts with different domains of the 23S rRNA in the assembled 50S subunit and ribosome. The globular domain of the protein is located near the polypeptide exit tunnel on the outside of the subunit, while an extended beta-hairpin is found that lines the wall of the exit tunnel in the center of the 70S ribosome. This chain is Large ribosomal subunit protein uL22, found in Roseiflexus castenholzii (strain DSM 13941 / HLO8).